The primary structure comprises 1379 residues: ATPase histone chaperone YTA7 (1379 aa).

2 disordered regions span residues 1-39 (MARN…TTTR) and 54-243 (DFLE…NSRN). Ala2 carries the N-acetylalanine modification. Phosphoserine is present on residues Ser11 and Ser17. The span at 61–78 (VMDKDETPVDVTSDEHHN) shows a compositional bias: basic and acidic residues. Ser94 is subject to Phosphoserine. Positions 97–110 (ENARTNEELTNERN) are enriched in basic and acidic residues. Acidic residues-rich tracts occupy residues 119–152 (PEED…DEDS) and 170–184 (DPDD…DEEG). Over residues 192–207 (SSKRLKRANSRRTRSS) the composition is skewed to basic residues. Thr212 is subject to Phosphothreonine. Basic residues predominate over residues 218-228 (RALRSRTRHSR). Position 229 is a phosphothreonine (Thr229). Phosphoserine occurs at positions 241, 259, and 285. Residues 302-330 (NPSPARRGRGGWNASQNSGPTRRLFPTGG) are disordered. Ser367, Ser369, and Ser370 each carry phosphoserine. Residues 375 to 396 (LPLGVTPKTKKENTQKKKKKKP) form a disordered region. An AAA-ATPase; required for its chromatin boundary function region spans residues 450–578 (VLFHGPPGTG…PALRRPGRFD (129 aa)). An ATP-binding site is contributed by 454-461 (GPPGTGKT). A Phosphoserine modification is found at Ser735. A Bromo domain is found at 974-1101 (RLKNVLKIKL…ANAQMGIEEI (128 aa)). Ser1142 bears the Phosphoserine mark. 2 disordered regions span residues 1233–1274 (TCTS…ANTN) and 1291–1316 (LHET…GKKS). Basic and acidic residues predominate over residues 1244–1254 (ERARKEPKENE). Phosphoserine is present on Ser1256. Polar residues predominate over residues 1256–1274 (SLQTQVTEENFSKIDANTN). The segment covering 1293–1316 (ETVEKRERSPIPKEVVEPEQGKKS) has biased composition (basic and acidic residues).

Belongs to the AAA ATPase family. Interacts with CSE4/CENP-A. Interacts with SCM3. Interacts with SPT16. Interacts with POB3. Interacts with the casein kinase II complex subunits CKA1, CKA2, CKB1 and CKB2. Interacts with RNA polymerase II. Interacts (via Bromo domain) with histone H3. Interacts (via Bromo domain) with histone H4. Phosphorylated by CDK1 and casein kinase II during S-phase, which leads to its eviction from histone gene promoters and promotes histone gene transcription.

The protein resides in the chromosome. It is found in the centromere. It localises to the nucleus. In terms of biological role, functions as an ATP-dependent nucleosome disassembly factor that helps evict canonical histone H3 from the 5'-end of genes upon their induction. Also contributes to kinetochore assembly by cooperating with SCM3 to load the histone H3 variant CSE4/CENP-A at centromeres. Provides a chromatin boundary function at the 5'-end of genes that restricts access by RTT106 and thus prevents ectopic spreading of repressive chromatin into coding regions. Also prevents heterochromatin spreading downstream of the silent mating-type locus HMR, this function is independent of the tRNA boundary element. Contributes to appropriate cell cycle regulation of histone gene expression by recruiting RNA polymerase II to histone genes, and subsequent CDK1- and casein kinase II-dependent eviction from chromatin is required to promote transcriptional elongation. The chain is ATPase histone chaperone YTA7 from Saccharomyces cerevisiae (strain ATCC 204508 / S288c) (Baker's yeast).